The following is a 158-amino-acid chain: Lipoprotein signal peptidase (158 aa).

A run of 3 helical transmembrane segments spans residues 12 to 32 (LFWWVAGLALASDRLTKAWIV), 46 to 66 (IIPGVFHITYVTNTGAAFSLF), and 71 to 91 (IWLRWLSLIVSLGLITWAILG). Catalysis depends on residues Asp-124 and Asp-140. Residues 135–155 (VFNVADIAINIGIVCLLWSAW) form a helical membrane-spanning segment.

The protein belongs to the peptidase A8 family.

Its subcellular location is the cell inner membrane. The catalysed reaction is Release of signal peptides from bacterial membrane prolipoproteins. Hydrolyzes -Xaa-Yaa-Zaa-|-(S,diacylglyceryl)Cys-, in which Xaa is hydrophobic (preferably Leu), and Yaa (Ala or Ser) and Zaa (Gly or Ala) have small, neutral side chains.. Its pathway is protein modification; lipoprotein biosynthesis (signal peptide cleavage). Functionally, this protein specifically catalyzes the removal of signal peptides from prolipoproteins. The polypeptide is Lipoprotein signal peptidase (Thermosynechococcus vestitus (strain NIES-2133 / IAM M-273 / BP-1)).